A 200-amino-acid chain; its full sequence is Putative glucose-6-phosphate isomerase 2 (200 aa).

Fe cation contacts are provided by H92, H94, E101, and H140.

This sequence belongs to the archaeal-type GPI family. As to quaternary structure, homodimer. The cofactor is Fe cation.

It localises to the cytoplasm. The catalysed reaction is alpha-D-glucose 6-phosphate = beta-D-fructose 6-phosphate. It functions in the pathway carbohydrate degradation; glycolysis; D-glyceraldehyde 3-phosphate and glycerone phosphate from D-glucose: step 2/4. The sequence is that of Putative glucose-6-phosphate isomerase 2 (pgiA2) from Rhizobium meliloti (strain 1021) (Ensifer meliloti).